A 264-amino-acid chain; its full sequence is Undecaprenyl-diphosphatase 2 (264 aa).

7 helical membrane-spanning segments follow: residues 29 to 49 (GSAF…SYFW), 77 to 97 (SWIV…SGVL), 107 to 127 (LTVI…AEIF), 137 to 157 (ASLA…IPGV), 180 to 200 (FSFL…LWEL), 212 to 232 (VLAT…WGLM), and 243 to 263 (FVIY…MGWL).

This sequence belongs to the UppP family.

It localises to the cell inner membrane. It catalyses the reaction di-trans,octa-cis-undecaprenyl diphosphate + H2O = di-trans,octa-cis-undecaprenyl phosphate + phosphate + H(+). Functionally, catalyzes the dephosphorylation of undecaprenyl diphosphate (UPP). Confers resistance to bacitracin. This Mesorhizobium japonicum (strain LMG 29417 / CECT 9101 / MAFF 303099) (Mesorhizobium loti (strain MAFF 303099)) protein is Undecaprenyl-diphosphatase 2.